The sequence spans 286 residues: ATP synthase gamma chain (286 aa).

Belongs to the ATPase gamma chain family. As to quaternary structure, F-type ATPases have 2 components, CF(1) - the catalytic core - and CF(0) - the membrane proton channel. CF(1) has five subunits: alpha(3), beta(3), gamma(1), delta(1), epsilon(1). CF(0) has three main subunits: a, b and c.

The protein resides in the cell membrane. In terms of biological role, produces ATP from ADP in the presence of a proton gradient across the membrane. The gamma chain is believed to be important in regulating ATPase activity and the flow of protons through the CF(0) complex. The protein is ATP synthase gamma chain of Bacillus mycoides (strain KBAB4) (Bacillus weihenstephanensis).